The following is a 129-amino-acid chain: Membrane protein 0 (129 aa).

The segment at 1–25 is disordered; the sequence is MATVHYSRRPGTPPVTLTSSPSMDD. The PPXY motif motif lies at 44-47; it reads PPPY. A helical transmembrane segment spans residues 100-120; that stretch reads FLILFGILTLTAVVVAIVAVF.

The protein belongs to the varicellovirus ORF0 protein family. In terms of assembly, interacts with host ITCH; this interaction probably mediates ITCH degradation.

The protein localises to the host Golgi apparatus membrane. In Homo sapiens (Human), this protein is Membrane protein 0.